The chain runs to 334 residues: DGAT1/2-independent enzyme synthesizing storage lipids (334 aa).

The Lumenal portion of the chain corresponds to 1 to 50 (MTNKNQSFGVGQDSMSSMTCLIHVLEAWFGVEHLEDYWNFANYLLWVFTP). The N-linked (GlcNAc...) asparagine glycan is linked to Asn5. The helical transmembrane segment at 51–71 (LLLLILPYFTIFLLYLTIIFL) threads the bilayer. Residues 72–125 (HIYKRKNVLKEAYSHNLWDGARKTVATLWDGHAAVWHGYEVHGMEKIPEEGPAL) are Cytoplasmic-facing. A helical transmembrane segment spans residues 126–146 (IIFYHGAIPIDFYYFMAKIFI). The active site involves His130. Topologically, residues 147–334 (HKGRTCRVVA…NKQKINQKTL (188 aa)) are lumenal.

The protein belongs to the diacylglycerol acyltransferase family. Highly divergent.

The protein localises to the endoplasmic reticulum membrane. It catalyses the reaction a 1,2-diacylglycerol + a 1,2-diacyl-sn-glycero-3-phosphocholine = a triacylglycerol + a 1-acyl-sn-glycero-3-phosphocholine. It carries out the reaction a 1-O-alkyl-2-acyl-sn-glycero-3-phosphocholine + a 1,2-diacylglycerol = a 1-O-alkyl-sn-glycero-3-phosphocholine + a triacylglycerol. The catalysed reaction is a 2-acylglycerol + an acyl-CoA = a 1,2-diacylglycerol + CoA. The enzyme catalyses an acyl-CoA + a 1,2-diacyl-sn-glycerol = a triacyl-sn-glycerol + CoA. It catalyses the reaction 2-(9Z-octadecenoyl)-glycerol + (9Z)-octadecenoyl-CoA = 1,2-di-(9Z-octadecenoyl)-glycerol + CoA. It carries out the reaction 1,2-di-(9Z-octadecenoyl)-sn-glycerol + (9Z)-octadecenoyl-CoA = 1,2,3-tri-(9Z-octadecenoyl)-glycerol + CoA. Its activity is regulated as follows. Acyltransferase activity is specifically inhibited by TMX1 at the endoplasmic reticulum, restricting accumulation of triacylglycerol. Catalytic subunit of the alternative triglyceride biosynthesis pathway, which mediates formation of triacylglycerol from diacylglycerol and membrane phospholipids. Synthesizes triacylglycerol at the expense of membrane phospholipids, such as phosphatidylcholine (PC) and its ether-linked form (ePC), thereby altering the composition of membranes. The alternative triglyceride biosynthesis pathway is probably required to provide the energy required for rapid growth when fuel sources are limiting. It maintains mitochondrial function during periods of extracellular lipid starvation. Can also use acyl-CoA as donor: acts as a acyl-CoA:monoacylglycerol acyltransferase (MGAT), but also shows acyl-CoA:diacylglycerol acyltransferase (DGAT) activity. In Bos taurus (Bovine), this protein is DGAT1/2-independent enzyme synthesizing storage lipids (TMEM68).